A 153-amino-acid chain; its full sequence is Large ribosomal subunit protein uL15 (153 aa).

A disordered region spans residues 1–49 (MQLHNLYPFPEERKTRRRVGRGSGSGLGCTAGKGHKGQNARAGGGVAPG). Residues 21–31 (RGSGSGLGCTA) are compositionally biased toward gly residues.

It belongs to the universal ribosomal protein uL15 family. As to quaternary structure, part of the 50S ribosomal subunit.

Its function is as follows. Binds to the 23S rRNA. The sequence is that of Large ribosomal subunit protein uL15 from Desulfovibrio desulfuricans (strain ATCC 27774 / DSM 6949 / MB).